The chain runs to 394 residues: Bone morphogenetic protein 15 (394 aa).

An N-terminal signal peptide occupies residues 1–18; that stretch reads MVLLSILRILLLWGLVLF. Positions 19–269 are excised as a propeptide; it reads MEHRVQMTQV…DPSLLLRRAR (251 aa). N87 and N238 each carry an N-linked (GlcNAc...) asparagine glycan. Disulfide bonds link C293/C359, C322/C391, and C326/C393. N-linked (GlcNAc...) asparagine glycosylation occurs at N375.

The protein belongs to the TGF-beta family. In terms of assembly, homodimer or heterodimer (Potential). But, in contrast to other members of this family, cannot be disulfide-linked.

Its subcellular location is the secreted. Its function is as follows. May be involved in follicular development. Seems to be an oocyte-specific growth/differentiation factor that stimulates folliculogenesis and granulosa cell (GC) growth. This Bos taurus (Bovine) protein is Bone morphogenetic protein 15 (BMP15).